The sequence spans 172 residues: Ribosome maturation factor RimM (172 aa).

Residues 99-171 (DDIPTWNYFI…LLTVEVPDGL (73 aa)) form the PRC barrel domain.

The protein belongs to the RimM family. In terms of assembly, binds ribosomal protein uS19.

The protein localises to the cytoplasm. An accessory protein needed during the final step in the assembly of 30S ribosomal subunit, possibly for assembly of the head region. Essential for efficient processing of 16S rRNA. May be needed both before and after RbfA during the maturation of 16S rRNA. It has affinity for free ribosomal 30S subunits but not for 70S ribosomes. This Phocaeicola vulgatus (strain ATCC 8482 / DSM 1447 / JCM 5826 / CCUG 4940 / NBRC 14291 / NCTC 11154) (Bacteroides vulgatus) protein is Ribosome maturation factor RimM.